The primary structure comprises 183 residues: Ribulose bisphosphate carboxylase small subunit, chloroplastic 4 (183 aa).

The N-terminal 57 residues, Met1–Gln57, are a transit peptide targeting the chloroplast.

Belongs to the RuBisCO small chain family. In terms of assembly, heterohexadecamer of 8 large and 8 small subunits.

Its subcellular location is the plastid. It localises to the chloroplast. RuBisCO catalyzes two reactions: the carboxylation of D-ribulose 1,5-bisphosphate, the primary event in carbon dioxide fixation, as well as the oxidative fragmentation of the pentose substrate. Both reactions occur simultaneously and in competition at the same active site. Although the small subunit is not catalytic it is essential for maximal activity. This Mesembryanthemum crystallinum (Common ice plant) protein is Ribulose bisphosphate carboxylase small subunit, chloroplastic 4.